The following is a 146-amino-acid chain: MNYIYSATTNSFYPLEMKEDYTQAGSWPDDAVEVDEQVYIEFSGLPPKGKIRIAGENGFPAWSEIPPPTHEEQIAAAELKKQQLINQANDYMNSKQWAGKAAIGRLKGEELAQYNLWLDYLDALELVDTSSAPDIEWPTPPAVQAR.

To E.coli YmfS.

This is an uncharacterized protein from Escherichia coli (strain K12).